A 511-amino-acid polypeptide reads, in one-letter code: Putative CBL-interacting protein kinase 13 (511 aa).

The Protein kinase domain occupies 25 to 279; sequence FEVGKLLGQG…AEGIMENEWF (255 aa). ATP-binding positions include 31-39 and lysine 54; that span reads LGQGNFAKV. The active-site Proton acceptor is the aspartate 147. Positions 165–194 are activation loop; the sequence is DFGLSAVADGMRRDGLFHTFCGTPAYVAPE. The tract at residues 307–340 is disordered; that stretch reads VDAPTSPPDTPRTVDSGDVGAAPTRPRKAGSLTS. In terms of domain architecture, NAF spans 321–383; it reads DSGDVGAAPT…PGFDLSGLFD (63 aa). The interval 400–429 is PPI; sequence KHTARFVSAAPVEVIVATLEAAAAAAGMAV.

This sequence belongs to the protein kinase superfamily. CAMK Ser/Thr protein kinase family. SNF1 subfamily. Mn(2+) is required as a cofactor.

The catalysed reaction is L-seryl-[protein] + ATP = O-phospho-L-seryl-[protein] + ADP + H(+). It carries out the reaction L-threonyl-[protein] + ATP = O-phospho-L-threonyl-[protein] + ADP + H(+). CIPK serine-threonine protein kinases interact with CBL proteins. Binding of a CBL protein to the regulatory NAF domain of CIPK protein lead to the activation of the kinase in a calcium-dependent manner. This chain is Putative CBL-interacting protein kinase 13 (CIPK13), found in Oryza sativa subsp. japonica (Rice).